The following is a 410-amino-acid chain: Regulator of microtubule dynamics protein 2 (410 aa).

The chain crosses the membrane as a helical span at residues 9 to 28 (LILGIMAGTAGISLLAFWYH). Ser-51 carries the phosphoserine modification. Positions 69-110 (QRRQLQILEKLNELLTNMEELKEEIRFLKETIPKLEECIQDE) form a coiled coil. The tract at residues 120-151 (ISPQHRARKKKGTTVQRSATSNSSEEAESEGG) is disordered. Residue Ser-121 is modified to Phosphoserine. Basic residues predominate over residues 121-131 (SPQHRARKKKG). At Thr-139 the chain carries Phosphothreonine. Tyr-152 is subject to Phosphotyrosine. A phosphothreonine mark is found at Thr-154 and Thr-157.

Belongs to the RMDN family. As to quaternary structure, interacts with microtubules.

It localises to the membrane. The protein localises to the cytoplasm. The protein resides in the cytoskeleton. Its subcellular location is the spindle. It is found in the spindle pole. This is Regulator of microtubule dynamics protein 2 (Rmdn2) from Mus musculus (Mouse).